The sequence spans 500 residues: Glycerol kinase (500 aa).

Position 16 (Thr16) interacts with ADP. Thr16 and Thr17 together coordinate ATP. Residue Thr16 participates in sn-glycerol 3-phosphate binding. Arg20 provides a ligand contact to ADP. Sn-glycerol 3-phosphate is bound by residues Arg86, Glu87, Tyr138, and Asp243. Glycerol-binding residues include Arg86, Glu87, Tyr138, Asp243, and Gln244. ADP contacts are provided by Thr265 and Gly313. ATP is bound by residues Thr265, Gly313, Gln317, and Gly414. The ADP site is built by Gly414 and Asn418.

Belongs to the FGGY kinase family.

The catalysed reaction is glycerol + ATP = sn-glycerol 3-phosphate + ADP + H(+). It functions in the pathway polyol metabolism; glycerol degradation via glycerol kinase pathway; sn-glycerol 3-phosphate from glycerol: step 1/1. Its activity is regulated as follows. Inhibited by fructose 1,6-bisphosphate (FBP). In terms of biological role, key enzyme in the regulation of glycerol uptake and metabolism. Catalyzes the phosphorylation of glycerol to yield sn-glycerol 3-phosphate. The sequence is that of Glycerol kinase from Trichormus variabilis (strain ATCC 29413 / PCC 7937) (Anabaena variabilis).